Consider the following 34-residue polypeptide: Hemopexin (34 aa).

The tract at residues 1–25 (RPLTQHKPHTPGDEHPHGAEPPGXD) is disordered.

Belongs to the hemopexin family. As to expression, expressed by the liver and secreted in plasma.

It is found in the secreted. In terms of biological role, binds heme and transports it to the liver for breakdown and iron recovery, after which the free hemopexin returns to the circulation. This is Hemopexin (HPX) from Gallus gallus (Chicken).